The sequence spans 805 residues: Leucine--tRNA ligase (805 aa).

A 'HIGH' region motif is present at residues 40–51; the sequence is PYPSGSGLHVGH. A 'KMSKS' region motif is present at residues 576–580; sequence KMSKS. Position 579 (Lys-579) interacts with ATP.

Belongs to the class-I aminoacyl-tRNA synthetase family.

It localises to the cytoplasm. It catalyses the reaction tRNA(Leu) + L-leucine + ATP = L-leucyl-tRNA(Leu) + AMP + diphosphate. This is Leucine--tRNA ligase from Chlorobium chlorochromatii (strain CaD3).